The chain runs to 864 residues: Protein PAT1 homolog 1 (864 aa).

Polar residues predominate over residues 427 to 439 (PPNSRPNGPQFSG). 3 disordered regions span residues 427–460 (PPNS…SGMP), 518–539 (WTAH…SRKD), and 551–602 (EMQK…STHN). The span at 551-580 (EMQKERLRDREKERQRERQERIDRGEERKP) shows a compositional bias: basic and acidic residues.

It belongs to the PAT1 family.

Its subcellular location is the cytoplasm. The protein resides in the P-body. RNA-binding protein involved in deadenylation-dependent decapping of mRNAs, leading to the degradation of mRNAs. Acts as a scaffold protein that connects deadenylation and decapping machinery. Required for the recruitment of P-body components such as cgh-1 in somatic blastomeres. May play a role in recruiting the decapping enzyme dcap-1 to cytoplasmic puncta in the cell body of the posterior touch receptor neuron, PLM. This chain is Protein PAT1 homolog 1 (patr-1), found in Caenorhabditis briggsae.